A 1133-amino-acid chain; its full sequence is DNA repair protein rad8 (1133 aa).

Disordered regions lie at residues 1–34 (MKRKVQKIIDEAPLEENSPPRFFDSDVEADSKPN) and 392–413 (PEARDESNSDLTPSSTEDEEDV). Ser18 bears the Phosphoserine mark. The region spanning 516–705 (PNSMPYHRGG…YSLIKFMRYE (190 aa)) is the Helicase ATP-binding domain. 529–536 (DEMGLGKT) is a binding site for ATP. A DEGH box motif is present at residues 656 to 659 (DEGH). The RING-type zinc-finger motif lies at 877 to 923 (CPICCNEPIQNPLLLNCKHACCGDCLSEHIQYQKRRNIIPPLCHTCR). Positions 971-1125 (QLRQLTHSSE…EGKQQVQSIE (155 aa)) constitute a Helicase C-terminal domain.

The protein belongs to the SNF2/RAD54 helicase family.

Its subcellular location is the cytoplasm. It is found in the nucleus. In terms of biological role, probable helicase, member of the UBC2/RAD6 epistasis group. Functions with DNA repair protein rad18 in error-free postreplication DNA repair. Involved in the maintenance of wild-type rates of instability of simple repetitive sequences such as poly(GT) repeats. Plays a role in surviving topoisomerase-mediated DNA damage. This Schizosaccharomyces pombe (strain 972 / ATCC 24843) (Fission yeast) protein is DNA repair protein rad8.